A 1988-amino-acid chain; its full sequence is Protein Ycf2 (1988 aa).

1337–1344 is a binding site for ATP; the sequence is GSIGTGRS. The segment at 1377–1396 is disordered; it reads SDDDSDDIDDSGDIDDSDDI.

The protein belongs to the Ycf2 family.

It localises to the plastid. The protein resides in the chloroplast stroma. In terms of biological role, probable ATPase of unknown function. Its presence in a non-photosynthetic plant (Epifagus virginiana) and experiments in tobacco indicate that it has an essential function which is probably not related to photosynthesis. In Cucumis sativus (Cucumber), this protein is Protein Ycf2.